Reading from the N-terminus, the 1543-residue chain is Tubby-related protein 4 (1543 aa).

7 WD repeats span residues glutamate 6–glutamine 72, arginine 73–arginine 115, tryptophan 116–arginine 158, histidine 159–tyrosine 237, alanine 238–leucine 276, serine 277–isoleucine 334, and phenylalanine 335–histidine 372. The region spanning alanine 364 to proline 414 is the SOCS box domain. Disordered regions lie at residues serine 530–serine 577 and threonine 829–proline 850. Residue serine 577 is modified to Phosphoserine. An asymmetric dimethylarginine mark is found at arginine 945 and arginine 950. 3 disordered regions span residues serine 1004–serine 1058, valine 1326–glutamate 1355, and aspartate 1367–lysine 1453. The segment covering threonine 1036 to glycine 1050 has biased composition (polar residues). A compositionally biased stretch (basic and acidic residues) spans arginine 1329–glutamate 1347. Serine 1343 and serine 1374 each carry phosphoserine. Residues glutamate 1443–lysine 1453 show a composition bias toward basic and acidic residues. Positions valine 1466 to lysine 1543 are TUB.

Belongs to the TUB family. Expressed mainly in the brain, skeletal muscle, testis and kidney.

The protein localises to the cytoplasm. It functions in the pathway protein modification; protein ubiquitination. In terms of biological role, may be a substrate-recognition component of a SCF-like ECS (Elongin-Cullin-SOCS-box protein) E3 ubiquitin ligase complex which mediates the ubiquitination and subsequent proteasomal degradation of target proteins. This chain is Tubby-related protein 4 (TULP4), found in Homo sapiens (Human).